Reading from the N-terminus, the 369-residue chain is Probable methyltransferase TCM_000331 (369 aa).

S-adenosyl-L-homocysteine contacts are provided by Tyr18, Cys60, Asn65, Asp98, Leu99, Ser137, and Phe138. 4 residues coordinate Mg(2+): Asn176, Asp261, Phe263, and Asn264.

It belongs to the methyltransferase superfamily. Type-7 methyltransferase family. Requires Mg(2+) as cofactor.

This is Probable methyltransferase TCM_000331 from Theobroma cacao (Cacao).